The following is a 265-amino-acid chain: Phosphatidylglycerol--prolipoprotein diacylglyceryl transferase (265 aa).

The next 7 membrane-spanning stretches (helical) occupy residues 11–31, 56–76, 91–111, 120–140, 173–193, 198–218, and 233–253; these read AVSIGPLQFRWYGLMYLFGFI, MVTWAIFGVVLGGRLGYILFY, IWHGGMSFHGGLLGVLFAVWL, FLSVVDFVAPLIPPGLFFGRI, QLYEAVLEGVVLFAAVWWFSG, VGAVSGLFGVLYAIFRFAVEF, and WLTMGQVLCLPLFGVGMWLLL. R139 is an a 1,2-diacyl-sn-glycero-3-phospho-(1'-sn-glycerol) binding site.

Belongs to the Lgt family.

It localises to the cell inner membrane. It carries out the reaction L-cysteinyl-[prolipoprotein] + a 1,2-diacyl-sn-glycero-3-phospho-(1'-sn-glycerol) = an S-1,2-diacyl-sn-glyceryl-L-cysteinyl-[prolipoprotein] + sn-glycerol 1-phosphate + H(+). Its pathway is protein modification; lipoprotein biosynthesis (diacylglyceryl transfer). Catalyzes the transfer of the diacylglyceryl group from phosphatidylglycerol to the sulfhydryl group of the N-terminal cysteine of a prolipoprotein, the first step in the formation of mature lipoproteins. This chain is Phosphatidylglycerol--prolipoprotein diacylglyceryl transferase, found in Nitratidesulfovibrio vulgaris (strain DSM 19637 / Miyazaki F) (Desulfovibrio vulgaris).